The primary structure comprises 347 residues: Ribosomal RNA small subunit methyltransferase C (347 aa).

Belongs to the methyltransferase superfamily. RsmC family. Monomer.

It localises to the cytoplasm. It carries out the reaction guanosine(1207) in 16S rRNA + S-adenosyl-L-methionine = N(2)-methylguanosine(1207) in 16S rRNA + S-adenosyl-L-homocysteine + H(+). Specifically methylates the guanine in position 1207 of 16S rRNA in the 30S particle. The chain is Ribosomal RNA small subunit methyltransferase C from Serratia proteamaculans (strain 568).